Consider the following 1148-residue polypeptide: Envelopment polyprotein (1148 aa).

An N-terminal signal peptide occupies residues 1-23 (MGELSPVCLYLLLQGLLLCNTGA). At 24 to 495 (ARNLNELKME…VPGLHGWATM (472 aa)) the chain is on the lumenal side. 6 disulfides stabilise this stretch: Cys-34–Cys-159, Cys-68–Cys-165, Cys-117–Cys-136, Cys-141–Cys-146, Cys-183–Cys-193, and Cys-218–Cys-257. N-linked (GlcNAc...) asparagine; by host glycosylation occurs at Asn-142. N-linked (GlcNAc...) asparagine; by host glycosylation occurs at Asn-357. Intrachain disulfides connect Cys-386–Cys-445, Cys-390–Cys-399, Cys-415–Cys-434, and Cys-462–Cys-485. Asn-409 carries N-linked (GlcNAc...) asparagine; by host glycosylation. Residues 496–516 (LLLLTFCFGWVLIPTITMILL) traverse the membrane as a helical segment. The Cytoplasmic portion of the chain corresponds to 517–637 (KILIAFAYLC…LSLFRYRSRF (121 aa)). The segment at 526-543 (CSKYNTDSKFRILIEKVK) is binding to the ribonucleoprotein. CCHC-type zinc fingers lie at residues 555–575 (CEVCQYECETAKELESHRKSC) and 580–601 (CPYCLNPSEATTSALQAHFKVC). Binding to the ribonucleoprotein regions lie at residues 598 to 615 (FKVCKLRSRFQENLRKSL), 602 to 613 (KLRSRFQENLRK), and 621 to 635 (MQGCYRTLSLFRYRS). The ITAM domain maps to 621-644 (MQGCYRTLSLFRYRSRFFVGLVWC). The YxxL motif lies at 625 to 628 (YRTL). A helical membrane pass occupies residues 638–658 (FVGLVWCVLLVHHLIVWAASA). The Lumenal portion of the chain corresponds to 659 to 1114 (ETQNLNAGWT…EWILGVLNGN (456 aa)). 8 disulfide bridges follow: Cys-745/Cys-780, Cys-749/Cys-787, Cys-761/Cys-894, Cys-775/Cys-905, Cys-790/Cys-913, Cys-816/Cys-825, Cys-833/Cys-842, and Cys-873/Cys-877. Residues 767–787 (YEYETGWGCNPPDCPGVGTGC) form a fusion loop region. The N-linked (GlcNAc...) asparagine; by host glycan is linked to Asn-937. 5 disulfide bridges follow: Cys-979–Cys-1009, Cys-1002–Cys-1054, Cys-1019–Cys-1024, Cys-1055–Cys-1060, and Cys-1094–Cys-1098. The helical transmembrane segment at 1115–1135 (WMVVAVLVVLLILSILLFTLC) threads the bilayer. 2 binding to the ribonucleoprotein regions span residues 1131–1143 (LFTLCCPRRPSYR) and 1131–1148 (LFTLCCPRRPSYRKEHKP). Topologically, residues 1136 to 1148 (CPRRPSYRKEHKP) are cytoplasmic.

It belongs to the hantavirus envelope glycoprotein family. As to quaternary structure, homodimer. Homotetramer; forms heterotetrameric Gn-Gc spikes in the pre-fusion conformation. Interacts (via C-terminus) with the nucleoprotein. Interacts with host TUFM; this interaction contributes to the virus-induced degradation of mitochondria by autophagy, which leads to degradation of host MAVS and inhibition of type I interferon (IFN) responses. Interacts with host MAP1LC3B; this interaction contributes to the virus-induced degradation of mitochondria by autophagy, which leads to degradation of host MAVS and inhibition of type I interferon (IFN) responses. Homodimer. Homotetramer; forms heterotetrameric Gn-Gc spikes in the pre-fusion conformation. Homotrimer; forms homotrimer in the post-fusion conformation at acidic pH. Interacts (via C-terminus) with the nucleoprotein. In terms of processing, envelope polyprotein precursor is quickly cleaved in vivo just after synthesis, presumably by host signal peptidase.

Its subcellular location is the virion membrane. It is found in the host cell surface. The protein localises to the host Golgi apparatus membrane. It localises to the host endoplasmic reticulum membrane. The protein resides in the host mitochondrion. Functionally, forms homotetramers with glycoprotein C at the surface of the virion. Attaches the virion to host cell receptors including integrin ITGAV/ITGB3. This attachment induces virion internalization predominantly through clathrin-dependent endocytosis. Mediates the assembly and budding of infectious virus particles through its interaction with the nucleocapsid protein and the viral genome. May dysregulate normal immune and endothelial cell responses through an ITAM motif. Translocates to mitochondria, binds to host TUFM and recruits MAP1LC3B. These interactions induce mitochondrial autophagy and therefore destruction of host MAVS leading to inhibition of type I interferon (IFN) responses. Concomitant breakdown of glycoprotein N is apparently prevented by the nucleoprotein that may inhibit Gn-stimulated autophagosome-lysosome fusion. Interacts with the viral genomic RNA. Its function is as follows. Forms homotetramers with glycoprotein N at the surface of the virion. Attaches the virion to host cell receptors including integrin ITGAV/ITGB3. This attachment induces virion internalization predominantly through clathrin-dependent endocytosis. Class II fusion protein that promotes fusion of viral membrane with host endosomal membrane after endocytosis of the virion. This is Envelopment polyprotein (GP) from Homo sapiens (Human).